Here is a 371-residue protein sequence, read N- to C-terminus: Geranylgeranyl pyrophosphate synthase paxG (371 aa).

Lys89, Arg92, and His121 together coordinate isopentenyl diphosphate. Mg(2+)-binding residues include Asp128 and Asp132. Arg137 lines the dimethylallyl diphosphate pocket. Isopentenyl diphosphate is bound at residue Arg138. 3 residues coordinate dimethylallyl diphosphate: Lys215, Thr216, and Gln249. Asp252 is a binding site for Mg(2+). Dimethylallyl diphosphate is bound by residues Asn256, Lys266, and Lys276. Residues 369–371 carry the Peroxisomal targeting signal motif; sequence GRV.

Belongs to the FPP/GGPP synthase family. Mg(2+) serves as cofactor.

Its subcellular location is the peroxisome. It catalyses the reaction isopentenyl diphosphate + dimethylallyl diphosphate = (2E)-geranyl diphosphate + diphosphate. The catalysed reaction is isopentenyl diphosphate + (2E)-geranyl diphosphate = (2E,6E)-farnesyl diphosphate + diphosphate. The enzyme catalyses isopentenyl diphosphate + (2E,6E)-farnesyl diphosphate = (2E,6E,10E)-geranylgeranyl diphosphate + diphosphate. It participates in secondary metabolite biosynthesis. In terms of biological role, geranylgeranyl pyrophosphate synthase; part of the gene cluster that mediates the biosynthesis of paxilline, a mycotoxin that acts as an inhibitor of mammalian maxi-K channels. PaxG, the geranylgeranyl diphosphate (GGPP) synthase is proposed to catalyze the first step in paxilline biosynthesis. Condensation of indole-3-glycerol phosphate with GGPP by paxC then forms 3-geranylgeranylindole (3-GGI), followed by epoxidation and cyclization of this intermediate (by paxM and paxB) to form paspaline. Paspaline is subsequently converted to 13-desoxypaxilline by paxP, the latter being then converted to paxilline by paxQ. Finally paxilline can be mono- and di-prenylated by paxD. The chain is Geranylgeranyl pyrophosphate synthase paxG from Penicillium paxilli.